We begin with the raw amino-acid sequence, 327 residues long: G-protein coupled receptor 55 (327 aa).

At 1-20 (MSQPERDNCSFDSVDKLTRT) the chain is on the extracellular side. N-linked (GlcNAc...) asparagine glycosylation occurs at Asn-8. The helical transmembrane segment at 21–41 (LQLAVHIPTFLLGLVLNLLAI) threads the bilayer. The Cytoplasmic portion of the chain corresponds to 42-57 (RGFSAFLKKRKLDYIA). A helical membrane pass occupies residues 58-78 (TSIYMINLAVFDLLLVLSLPF). Residues 79–93 (KMVLPQVESPLPSFC) are Extracellular-facing. The chain crosses the membrane as a helical span at residues 94–114 (TLVECLYFISMYGSVFTICFI). The Cytoplasmic segment spans residues 115-136 (SLDRFLAIQYPILASHLRSPRK). Residues 137–157 (TFGICCIIWMLVWIGSIPIYT) traverse the membrane as a helical segment. The Extracellular portion of the chain corresponds to 158–179 (FHREVERYKCFHNMSDVTWSAS). The N-linked (GlcNAc...) asparagine glycan is linked to Asn-170. A helical transmembrane segment spans residues 180–200 (VFFPLEIFGFLLPMGIMGFCS). Over 201–239 (YRSIHILLRRPDSTEDWVQQRDTKGWVQKRACIWTIATN) the chain is Cytoplasmic. Residues 240-260 (LVIFVVSFLPVHLGFFLQYLV) traverse the membrane as a helical segment. Residues 261–279 (RNRFILDCRMKQGISLFLQ) lie on the Extracellular side of the membrane. A helical transmembrane segment spans residues 280–300 (LSLCFSNINCCLDVFCYYFVI). The Cytoplasmic segment spans residues 301–327 (KEFRMRIKAHRPSTIKLVNQDTMVSRG).

This sequence belongs to the G-protein coupled receptor 1 family. In terms of tissue distribution, highly expressed in splenic plasma cells.

It is found in the cell membrane. Its function is as follows. G-protein coupled receptor that binds to several ligands including 2-arachidonoyl lysophosphatidylinositol or lysophosphatidylglucoside with high affinity, leading to rapid and transient activation of numerous intracellular signaling pathways. Induces the Ca(2+) release from intracellular stores via ERK, the heterotrimeric G protein GNA13 and RHOA leading to morphological changes including cell rounding and stress fiber formation. In macrophages, acts downstream of lysophosphatidylglucoside to inhibit the translocation of the phospholipid-transporting ABCA1 to plasma membrane and subsequent cholesterol efflux leading to lipid accumulation and foam cell formation. May be involved in hyperalgesia associated with inflammatory and neuropathic pain. This is G-protein coupled receptor 55 (Gpr55) from Mus musculus (Mouse).